The sequence spans 273 residues: 2,3,4,5-tetrahydropyridine-2,6-dicarboxylate N-succinyltransferase (273 aa).

Arg-104 and Asp-141 together coordinate substrate.

Belongs to the transferase hexapeptide repeat family. As to quaternary structure, homotrimer.

Its subcellular location is the cytoplasm. It catalyses the reaction (S)-2,3,4,5-tetrahydrodipicolinate + succinyl-CoA + H2O = (S)-2-succinylamino-6-oxoheptanedioate + CoA. It participates in amino-acid biosynthesis; L-lysine biosynthesis via DAP pathway; LL-2,6-diaminopimelate from (S)-tetrahydrodipicolinate (succinylase route): step 1/3. The protein is 2,3,4,5-tetrahydropyridine-2,6-dicarboxylate N-succinyltransferase of Laribacter hongkongensis (strain HLHK9).